The primary structure comprises 218 residues: Ribose-5-phosphate isomerase A (218 aa).

Residues 28 to 31 (TGST), 81 to 84 (DGAD), and 94 to 97 (KGGG) contribute to the substrate site. Residue Glu103 is the Proton acceptor of the active site. Lys121 is a binding site for substrate.

Belongs to the ribose 5-phosphate isomerase family. As to quaternary structure, homodimer.

It catalyses the reaction aldehydo-D-ribose 5-phosphate = D-ribulose 5-phosphate. It functions in the pathway carbohydrate degradation; pentose phosphate pathway; D-ribose 5-phosphate from D-ribulose 5-phosphate (non-oxidative stage): step 1/1. In terms of biological role, catalyzes the reversible conversion of ribose-5-phosphate to ribulose 5-phosphate. This is Ribose-5-phosphate isomerase A from Aliivibrio salmonicida (strain LFI1238) (Vibrio salmonicida (strain LFI1238)).